The chain runs to 317 residues: MYSKILSTGSYLPKHIRTNADLEKMVDTSDEWISERTGIKERRIAEASETVATMGFEAAQNCLAVSPMDVNEIDLIVVATTSATHAFPSTACQIQKMLGIKDAIAFDVAAACSGFVYALTVADQFIRTGKVKKALVIGADLFSRALNPEDRGTIILFGDGAGAVILEASEQAGIISTHLHATGESAEVLTLANQARGIESDPAYLEMQGNATFKIAVRELANVVEETLEANQLDKKDIDWLVPHQANLRIISATAKKLDMDMSQVVVTLDRHGNTSAGSIPSALDEAVRDGRIQRGQLLLLEAFGGGLTWGSALVRF.

Residues Cys-112 and His-244 contribute to the active site. Residues 245–249 (QANLR) are ACP-binding. Asn-274 is an active-site residue.

The protein belongs to the thiolase-like superfamily. FabH family. In terms of assembly, homodimer.

It localises to the cytoplasm. It catalyses the reaction malonyl-[ACP] + acetyl-CoA + H(+) = 3-oxobutanoyl-[ACP] + CO2 + CoA. The protein operates within lipid metabolism; fatty acid biosynthesis. Catalyzes the condensation reaction of fatty acid synthesis by the addition to an acyl acceptor of two carbons from malonyl-ACP. Catalyzes the first condensation reaction which initiates fatty acid synthesis and may therefore play a role in governing the total rate of fatty acid production. Possesses both acetoacetyl-ACP synthase and acetyl transacylase activities. Its substrate specificity determines the biosynthesis of branched-chain and/or straight-chain of fatty acids. The sequence is that of Beta-ketoacyl-[acyl-carrier-protein] synthase III from Pasteurella multocida (strain Pm70).